A 414-amino-acid polypeptide reads, in one-letter code: Serine/threonine transporter SstT (414 aa).

The next 8 helical transmembrane spans lie at 22-42 (GLVL…TIGF), 54-74 (IFVK…VMAA), 89-109 (IIVL…IAGF), 148-168 (AIFK…GLAL), 189-209 (IVHV…AETL), 223-243 (LLAV…PILV), 305-325 (MAGA…TLGL), and 337-357 (IVAA…LLLI).

The protein belongs to the dicarboxylate/amino acid:cation symporter (DAACS) (TC 2.A.23) family.

Its subcellular location is the cell inner membrane. It carries out the reaction L-serine(in) + Na(+)(in) = L-serine(out) + Na(+)(out). The enzyme catalyses L-threonine(in) + Na(+)(in) = L-threonine(out) + Na(+)(out). Functionally, involved in the import of serine and threonine into the cell, with the concomitant import of sodium (symport system). The chain is Serine/threonine transporter SstT from Haemophilus influenzae (strain PittGG).